Consider the following 206-residue polypeptide: Thymidylate kinase (206 aa).

Residue 10 to 17 (GIDGAGKS) participates in ATP binding.

Belongs to the thymidylate kinase family.

It carries out the reaction dTMP + ATP = dTDP + ADP. In terms of biological role, phosphorylation of dTMP to form dTDP in both de novo and salvage pathways of dTTP synthesis. The protein is Thymidylate kinase of Neisseria meningitidis serogroup C / serotype 2a (strain ATCC 700532 / DSM 15464 / FAM18).